Reading from the N-terminus, the 617-residue chain is Dihydroxy-acid dehydratase (617 aa).

Asp81 contacts Mg(2+). Cys122 lines the [2Fe-2S] cluster pocket. Residues Asp123 and Lys124 each coordinate Mg(2+). Lys124 is modified (N6-carboxylysine). Position 197 (Cys197) interacts with [2Fe-2S] cluster. Glu494 is a Mg(2+) binding site. The active-site Proton acceptor is the Ser520.

This sequence belongs to the IlvD/Edd family. Homodimer. [2Fe-2S] cluster is required as a cofactor. The cofactor is Mg(2+).

The catalysed reaction is (2R)-2,3-dihydroxy-3-methylbutanoate = 3-methyl-2-oxobutanoate + H2O. It carries out the reaction (2R,3R)-2,3-dihydroxy-3-methylpentanoate = (S)-3-methyl-2-oxopentanoate + H2O. It participates in amino-acid biosynthesis; L-isoleucine biosynthesis; L-isoleucine from 2-oxobutanoate: step 3/4. The protein operates within amino-acid biosynthesis; L-valine biosynthesis; L-valine from pyruvate: step 3/4. Functionally, functions in the biosynthesis of branched-chain amino acids. Catalyzes the dehydration of (2R,3R)-2,3-dihydroxy-3-methylpentanoate (2,3-dihydroxy-3-methylvalerate) into 2-oxo-3-methylpentanoate (2-oxo-3-methylvalerate) and of (2R)-2,3-dihydroxy-3-methylbutanoate (2,3-dihydroxyisovalerate) into 2-oxo-3-methylbutanoate (2-oxoisovalerate), the penultimate precursor to L-isoleucine and L-valine, respectively. This chain is Dihydroxy-acid dehydratase, found in Frankia casuarinae (strain DSM 45818 / CECT 9043 / HFP020203 / CcI3).